The primary structure comprises 698 residues: Ubiquitin-like modifier-activating enzyme ATG7 (698 aa).

Positions 11-13 (FAP) match the FAP motif motif. K41 is covalently cross-linked (Glycyl lysine isopeptide (Lys-Gly) (interchain with G-Cter in ubiquitin)). The active-site Glycyl thioester intermediate is C567. S693 bears the Phosphoserine mark.

Belongs to the ATG7 family. As to quaternary structure, homodimer. Interacts with ATG3; this interaction is essential for the transfer of ATG8-like proteins's thioester from ATG7 to ATG3 and plays a role in the conjugation of ATG12 to ATG5. Interacts with ATG12. Forms intermediate conjugates with GABARAPL1. Forms intermediate conjugates with ATG8-like proteins such as GABARAP, GABARAPL2 or MAP1LC3A. Interacts with EP300 acetyltransferase. Interacts with FOXO1. In terms of processing, acetylated by EP300. Polyubiquitinated on Lys-41 via 'Lys-63'-linked ubiquitin by TRIM32; this modification positiely regulates ATG8 and ATG12 activating enzyme activity leading to initiation of autophagy under metabolic stress. In terms of tissue distribution, widely expressed.

It is found in the cytoplasm. It localises to the preautophagosomal structure. E1-like activating enzyme involved in the 2 ubiquitin-like systems required for cytoplasm to vacuole transport (Cvt) and autophagy. Activates ATG12 for its conjugation with ATG5 as well as the ATG8 family proteins for their conjugation with phosphatidylethanolamine. Both systems are needed for the ATG8 association to Cvt vesicles and autophagosomes membranes. Required for autophagic death induced by caspase-8 inhibition. Facilitates LC3-I lipidation with phosphatidylethanolamine to form LC3-II which is found on autophagosomal membranes. Required for mitophagy which contributes to regulate mitochondrial quantity and quality by eliminating the mitochondria to a basal level to fulfill cellular energy requirements and preventing excess ROS production. Modulates p53/TP53 activity to regulate cell cycle and survival during metabolic stress. Also plays a key role in the maintenance of axonal homeostasis, the prevention of axonal degeneration, the maintenance of hematopoietic stem cells, the formation of Paneth cell granules, as well as in adipose differentiation. Plays a role in regulating the liver clock and glucose metabolism by mediating the autophagic degradation of CRY1 (clock repressor) in a time-dependent manner. This chain is Ubiquitin-like modifier-activating enzyme ATG7, found in Rattus norvegicus (Rat).